We begin with the raw amino-acid sequence, 201 residues long: Superoxide dismutase [Mn/Fe] (201 aa).

The Fe(3+) site is built by His27, His81, Asp162, and His166. Mn(2+)-binding residues include His27, His81, Asp162, and His166.

The protein belongs to the iron/manganese superoxide dismutase family. As to quaternary structure, homodimer. Requires Mn(2+) as cofactor. The cofactor is Fe(3+).

It carries out the reaction 2 superoxide + 2 H(+) = H2O2 + O2. Functionally, destroys superoxide anion radicals which are normally produced within the cells and which are toxic to biological systems. Catalyzes the dismutation of superoxide anion radicals into O2 and H2O2 by successive reduction and oxidation of the transition metal ion at the active site. The sequence is that of Superoxide dismutase [Mn/Fe] (sodA) from Staphylococcus carnosus.